We begin with the raw amino-acid sequence, 325 residues long: ATPase GET3 (325 aa).

34 to 41 (KGGVGKTT) lines the ATP pocket. Residue D63 is part of the active site. Residues E243 and N270 each contribute to the ATP site. Zn(2+) is bound by residues C281 and C284.

This sequence belongs to the arsA ATPase family. Homodimer.

Its subcellular location is the cytoplasm. It is found in the endoplasmic reticulum. In terms of biological role, ATPase required for the post-translational delivery of tail-anchored (TA) proteins to the endoplasmic reticulum. Recognizes and selectively binds the transmembrane domain of TA proteins in the cytosol. This complex then targets to the endoplasmic reticulum by membrane-bound receptors, where the tail-anchored protein is released for insertion. This process is regulated by ATP binding and hydrolysis. ATP binding drives the homodimer towards the closed dimer state, facilitating recognition of newly synthesized TA membrane proteins. ATP hydrolysis is required for insertion. Subsequently, the homodimer reverts towards the open dimer state, lowering its affinity for the membrane-bound receptor, and returning it to the cytosol to initiate a new round of targeting. In Coccidioides posadasii (strain C735) (Valley fever fungus), this protein is ATPase GET3.